Consider the following 473-residue polypeptide: Sarcalumenin (473 aa).

The first 20 residues, 1 to 20 (MRALVLLGCLLASLLFSGQA), serve as a signal peptide directing secretion. A Dynamin-type G domain is found at 90-331 (ITSKPMVLFL…IENRLENKIA (242 aa)). Residues 100–107 (GPWSVGKS) form a G1 motif region. Residues 128 to 129 (EP) are G2 motif. The interval 190 to 193 (DTPG) is G3 motif. The tract at residues 255 to 258 (NKAD) is G4 motif. A region of interest (G5 motif) is located at residue Pro278. 2 N-linked (GlcNAc...) asparagine glycosylation sites follow: Asn281 and Asn389.

The protein belongs to the TRAFAC class dynamin-like GTPase superfamily. Dynamin/Fzo/YdjA family. In terms of processing, N-glycosylated.

The protein localises to the sarcoplasmic reticulum lumen. It is found in the sarcoplasmic reticulum membrane. The protein is Sarcalumenin (SRL) of Homo sapiens (Human).